A 633-amino-acid polypeptide reads, in one-letter code: Sodium- and chloride-dependent glycine transporter 1 (633 aa).

The Cytoplasmic portion of the chain corresponds to 1-30 (MGLCVNGAVPSEATKKDENLKRGNWGNQIE). Helical transmembrane passes span 31-51 (FVLTSVGYAVGLGNVWRFPYL), 58-78 (GAFMFPYFIMLIFCGIPLFFM), and 113-133 (YIGIYYNVVICIAFYYFFASM). The Extracellular segment spans residues 134-208 (NRVLPWTYCN…ISEDIGDFGE (75 aa)). N-linked (GlcNAc...) asparagine glycans are attached at residues asparagine 158, asparagine 164, asparagine 173, and asparagine 179. Transmembrane regions (helical) follow at residues 209-229 (VQLPLLGCLGVSWLVVFLCLI), 238-258 (VVYFTATFPYVVLTILFIRGI), 283-303 (VWGDAASQIFYSLGCAWGGLI), 330-350 (SVYAGFVIFSILGFMATHLGV), 373-393 (LLPISPLWSILFFFMLILLGL), 429-449 (IIGFLLGIPLTTQAGIYWLLL), 453-473 (YAASFSLVIISCIMCIAVMYI), 493-513 (LFFQICWRFISPGIIFFILIF), and 533-553 (ITIGFLMALSSVICIPLYAIF). The Cytoplasmic segment spans residues 554-633 (KIWCSEGDTF…GQAHTQDSKV (80 aa)). The disordered stretch occupies residues 588–633 (RYAQMSSTRSESNPEAQPLNPEKMKEDLSLTIQGSNGQAHTQDSKV). Composition is skewed to polar residues over residues 591–602 (QMSSTRSESNPE) and 617–633 (LTIQGSNGQAHTQDSKV).

The protein belongs to the sodium:neurotransmitter symporter (SNF) (TC 2.A.22) family. SLC6A9 subfamily. In terms of tissue distribution, first expressed in early tailbud stage embryos in the midbrain and anterior spinal cord, and weakly in the hindbrain. By late tailbud stages, expression extends posteriorly in the spinal cord to appear in between somites. Expressed in the forebrain, retina, between the somites and in the blood islands by the swimming tadpole stages.

It is found in the cell membrane. The enzyme catalyses glycine(out) + chloride(out) + 2 Na(+)(out) = glycine(in) + chloride(in) + 2 Na(+)(in). Functionally, sodium- and chloride-dependent glycine transporter which is essential for regulating glycine concentrations at inhibitory glycinergic synapses. The polypeptide is Sodium- and chloride-dependent glycine transporter 1 (Xenopus laevis (African clawed frog)).